The following is a 395-amino-acid chain: ATP phosphoribosyltransferase regulatory subunit (395 aa).

It belongs to the class-II aminoacyl-tRNA synthetase family. HisZ subfamily. In terms of assembly, heteromultimer composed of HisG and HisZ subunits.

It is found in the cytoplasm. The protein operates within amino-acid biosynthesis; L-histidine biosynthesis; L-histidine from 5-phospho-alpha-D-ribose 1-diphosphate: step 1/9. Required for the first step of histidine biosynthesis. May allow the feedback regulation of ATP phosphoribosyltransferase activity by histidine. This is ATP phosphoribosyltransferase regulatory subunit from Pseudomonas savastanoi pv. phaseolicola (strain 1448A / Race 6) (Pseudomonas syringae pv. phaseolicola (strain 1448A / Race 6)).